A 266-amino-acid polypeptide reads, in one-letter code: GTP cyclohydrolase MptA (266 aa).

The protein belongs to the GTP cyclohydrolase IV family. Homodimer. Fe(2+) is required as a cofactor.

The catalysed reaction is GTP + H2O = 7,8-dihydroneopterin 2',3'-cyclic phosphate + formate + diphosphate + H(+). It functions in the pathway cofactor biosynthesis; 5,6,7,8-tetrahydromethanopterin biosynthesis. In terms of biological role, converts GTP to 7,8-dihydro-D-neopterin 2',3'-cyclic phosphate, the first intermediate in the biosynthesis of coenzyme methanopterin. The protein is GTP cyclohydrolase MptA of Pyrococcus abyssi (strain GE5 / Orsay).